Consider the following 143-residue polypeptide: Large ribosomal subunit protein uL11 (143 aa).

It belongs to the universal ribosomal protein uL11 family. In terms of assembly, part of the ribosomal stalk of the 50S ribosomal subunit. Interacts with L10 and the large rRNA to form the base of the stalk. L10 forms an elongated spine to which L12 dimers bind in a sequential fashion forming a multimeric L10(L12)X complex. One or more lysine residues are methylated.

Functionally, forms part of the ribosomal stalk which helps the ribosome interact with GTP-bound translation factors. This Halorhodospira halophila (strain DSM 244 / SL1) (Ectothiorhodospira halophila (strain DSM 244 / SL1)) protein is Large ribosomal subunit protein uL11.